Consider the following 323-residue polypeptide: Acetyl esterase (323 aa).

Residues 91–93 carry the Involved in the stabilization of the negatively charged intermediate by the formation of the oxyanion hole motif; the sequence is HGG. Active-site residues include Ser-165, Asp-262, and His-292.

Belongs to the 'GDXG' lipolytic enzyme family. As to quaternary structure, homodimer. Interacts with MalT and MelA.

It is found in the cytoplasm. Displays esterase activity towards short chain fatty esters (acyl chain length of up to 8 carbons). Able to hydrolyze triacetylglycerol (triacetin) and tributyrylglycerol (tributyrin), but not trioleylglycerol (triolein) or cholesterol oleate. Negatively regulates MalT activity by antagonizing maltotriose binding. Inhibits MelA galactosidase activity. The protein is Acetyl esterase of Salmonella paratyphi B (strain ATCC BAA-1250 / SPB7).